The sequence spans 202 residues: Protein-methionine-sulfoxide reductase heme-binding subunit MsrQ (202 aa).

Transmembrane regions (helical) follow at residues 8-28, 42-62, 75-95, 110-130, 147-167, and 169-189; these read LAVF…AWIF, LGLG…LQKL, LGLW…VFIL, PYII…ITSN, LVYL…RADL, and EWTL…PSIA.

Belongs to the MsrQ family. Heterodimer of a catalytic subunit (MsrP) and a heme-binding subunit (MsrQ). Requires FMN as cofactor. Heme b serves as cofactor.

It is found in the cell inner membrane. In terms of biological role, part of the MsrPQ system that repairs oxidized periplasmic proteins containing methionine sulfoxide residues (Met-O), using respiratory chain electrons. Thus protects these proteins from oxidative-stress damage caused by reactive species of oxygen and chlorine generated by the host defense mechanisms. MsrPQ is essential for the maintenance of envelope integrity under bleach stress, rescuing a wide series of structurally unrelated periplasmic proteins from methionine oxidation. MsrQ provides electrons for reduction to the reductase catalytic subunit MsrP, using the quinone pool of the respiratory chain. The sequence is that of Protein-methionine-sulfoxide reductase heme-binding subunit MsrQ from Pseudomonas aeruginosa (strain ATCC 15692 / DSM 22644 / CIP 104116 / JCM 14847 / LMG 12228 / 1C / PRS 101 / PAO1).